We begin with the raw amino-acid sequence, 583 residues long: Aspartate--tRNA ligase (583 aa).

Glu174 serves as a coordination point for L-aspartate. The aspartate stretch occupies residues 198-201 (QITK). Position 220 (Arg220) interacts with L-aspartate. ATP contacts are provided by residues 220–222 (RDE) and Gln229. Residue His443 participates in L-aspartate binding. Glu477 is an ATP binding site. Arg484 contributes to the L-aspartate binding site. 529–532 (GLDR) provides a ligand contact to ATP.

Belongs to the class-II aminoacyl-tRNA synthetase family. Type 1 subfamily. As to quaternary structure, homodimer.

Its subcellular location is the cytoplasm. The catalysed reaction is tRNA(Asp) + L-aspartate + ATP = L-aspartyl-tRNA(Asp) + AMP + diphosphate. Functionally, catalyzes the attachment of L-aspartate to tRNA(Asp) in a two-step reaction: L-aspartate is first activated by ATP to form Asp-AMP and then transferred to the acceptor end of tRNA(Asp). In Streptococcus agalactiae serotype V (strain ATCC BAA-611 / 2603 V/R), this protein is Aspartate--tRNA ligase.